Reading from the N-terminus, the 46-residue chain is GIFSKLAGKKLKNLLISGLKNVGKEVGMDVVRTGIDIAGCKIKGEC.

C40 and C46 are joined by a disulfide.

It belongs to the frog skin active peptide (FSAP) family. Esculentin subfamily. Expressed by the skin glands.

The protein resides in the secreted. Antimicrobial peptide. Stimulates insulin secretion by BRIN-BD11 cells in vitro. Shows hemolytic activity. In Pelophylax ridibundus (Marsh frog), this protein is Esculentin-1a/b.